A 436-amino-acid chain; its full sequence is Transcription factor MYB124 (436 aa).

Over residues 1–11 (MEDTKKKKKKN) the composition is skewed to basic residues. The segment at 1 to 23 (MEDTKKKKKKNINNNQDSKKKER) is disordered. Positions 8 to 15 (KKKNINNN) match the Nuclear localization signal 1 motif. HTH myb-type domains lie at 20–71 (KKER…YTYL) and 72–126 (NSDF…KKRA). 2 DNA-binding regions (H-T-H motif) span residues 48 to 71 (WAII…YTYL) and 99 to 122 (WTEI…TTLC). The Nuclear localization signal 2 motif lies at 151 to 158 (PRKSENET). Residues 309–328 (SWRQPDLHDSPASSEYSSGS) form a disordered region. Over residues 319 to 328 (PASSEYSSGS) the composition is skewed to polar residues.

As to quaternary structure, interacts with RBR1. As to expression, expressed in all shoot organs with higher levels in leaves, stems, flowers, siliques and floral buds. Also detected in roots tips.

It is found in the nucleus. Transcription factor that binds to DNA in promoters cis-regulatory element 5'-GGCGCGC-3' of cell cycle genes, including cyclins, cyclin-dependent kinases (CDKs), and components of the pre-replication complex. Binds to DNA in promoters cis-regulatory element 5'-AGCCG-3' of auxin regulated genes (e.g. PIN3 and PIN7). Together with FAMA and MYB88, ensures that stomata contain just two guard cells (GCs) by enforcing a single symmetric precursor cell division before stomatal maturity. Represses the expression of the mitosis-inducing factors CDKB1-1 and CDKA-1, specifically required for the last guard mother cells (GMC) symmetric divisions in the stomatal pathway. Represses CYCA2-3 in newly formed guard cells. Together with MYB88, regulates stomata spacing by restricting divisions late in the stomatal cell lineage thus limiting the number of GMC divisions. In collaboration with CDKB1-1 and CDKB1-2, restrict the G1/S transition and chloroplast and nuclear number during stomatal formation, and normally maintain fate and developmental progression throughout the stomatal cell lineage. Also involved in the shape regulation of pavement cells. Involved in sensing and/or transducing abiotic stress (e.g. drought and salt), probably via the positive regulation of NAC019. Regulates female reproduction being required for entry into megasporogenesis, probably via the regulation of cell cycle genes. Promotes histone H3K27me3 marks and represses stem cell gene expression. Required for lateral roots (LRs) initiation via the regulation of PIN3 expression in an auxin-dependent manner. Involved in responses to gravity stimulation in primary roots by regulating the transcription of PIN3 and PIN7 in gravity-sensing cells, thus modulating auxin asymmetric redistribution. The polypeptide is Transcription factor MYB124 (Arabidopsis thaliana (Mouse-ear cress)).